The chain runs to 186 residues: Pyridoxal 5'-phosphate synthase subunit PdxT (186 aa).

46–48 (GES) is a binding site for L-glutamine. Cys75 (nucleophile) is an active-site residue. Residues Arg101 and 128–129 (IR) each bind L-glutamine. Catalysis depends on charge relay system residues His165 and Glu167.

It belongs to the glutaminase PdxT/SNO family. In the presence of PdxS, forms a dodecamer of heterodimers. Only shows activity in the heterodimer.

The catalysed reaction is aldehydo-D-ribose 5-phosphate + D-glyceraldehyde 3-phosphate + L-glutamine = pyridoxal 5'-phosphate + L-glutamate + phosphate + 3 H2O + H(+). The enzyme catalyses L-glutamine + H2O = L-glutamate + NH4(+). It functions in the pathway cofactor biosynthesis; pyridoxal 5'-phosphate biosynthesis. In terms of biological role, catalyzes the hydrolysis of glutamine to glutamate and ammonia as part of the biosynthesis of pyridoxal 5'-phosphate. The resulting ammonia molecule is channeled to the active site of PdxS. This Methanocaldococcus jannaschii (strain ATCC 43067 / DSM 2661 / JAL-1 / JCM 10045 / NBRC 100440) (Methanococcus jannaschii) protein is Pyridoxal 5'-phosphate synthase subunit PdxT.